A 64-amino-acid polypeptide reads, in one-letter code: Large ribosomal subunit protein bL35 (64 aa).

2 disordered regions span residues 1–22 (MPKA…TGKI) and 34–64 (EHKP…LLNG). Positions 34-48 (EHKPSTRTRRLDGHT) are enriched in basic and acidic residues. Residues 50-64 (VSANDTQRVNSLLNG) are compositionally biased toward polar residues.

This sequence belongs to the bacterial ribosomal protein bL35 family.

This is Large ribosomal subunit protein bL35 from Mycobacterium leprae (strain Br4923).